Here is a 282-residue protein sequence, read N- to C-terminus: tRNA uridine(34) hydroxylase (282 aa).

Residues 128-222 form the Rhodanese domain; that stretch reads DGREVVMLDT…YFEEVGADHY (95 aa). Cysteine 182 serves as the catalytic Cysteine persulfide intermediate.

It belongs to the TrhO family.

It catalyses the reaction uridine(34) in tRNA + AH2 + O2 = 5-hydroxyuridine(34) in tRNA + A + H2O. Functionally, catalyzes oxygen-dependent 5-hydroxyuridine (ho5U) modification at position 34 in tRNAs. This is tRNA uridine(34) hydroxylase from Ralstonia nicotianae (strain ATCC BAA-1114 / GMI1000) (Ralstonia solanacearum).